We begin with the raw amino-acid sequence, 117 residues long: MAGLMKLACLVLACMIVAGPITSNAALSCGTVSGYVAPCIGYLTQNGPLPRGCCTGVTNLNNMARTTPDRQQACRCLVGAANSFPTLNAARAAGLPKACGVNIPYKISKSTNCNSVR.

Residues 1 to 25 form the signal peptide; that stretch reads MAGLMKLACLVLACMIVAGPITSNA. 4 disulfide bridges follow: C29/C76, C39/C53, C54/C99, and C74/C113.

It belongs to the plant LTP family.

Plant non-specific lipid-transfer proteins transfer phospholipids as well as galactolipids across membranes. May play a role in wax or cutin deposition in the cell walls of expanding epidermal cells and certain secretory tissues. The sequence is that of Non-specific lipid-transfer protein 2 (LTP2) from Brassica napus (Rape).